Consider the following 167-residue polypeptide: Ribosome maturation factor RimM (167 aa).

A PRC barrel domain is found at 94–165 (ENEYYYSDII…KIIITPMEGL (72 aa)).

Belongs to the RimM family. Binds ribosomal protein uS19.

Its subcellular location is the cytoplasm. An accessory protein needed during the final step in the assembly of 30S ribosomal subunit, possibly for assembly of the head region. Essential for efficient processing of 16S rRNA. May be needed both before and after RbfA during the maturation of 16S rRNA. It has affinity for free ribosomal 30S subunits but not for 70S ribosomes. In Staphylococcus aureus (strain bovine RF122 / ET3-1), this protein is Ribosome maturation factor RimM.